Here is a 285-residue protein sequence, read N- to C-terminus: Elongation factor Ts (285 aa).

An involved in Mg(2+) ion dislocation from EF-Tu region spans residues 84-87 (TDFV).

Belongs to the EF-Ts family.

It is found in the cytoplasm. Associates with the EF-Tu.GDP complex and induces the exchange of GDP to GTP. It remains bound to the aminoacyl-tRNA.EF-Tu.GTP complex up to the GTP hydrolysis stage on the ribosome. The polypeptide is Elongation factor Ts (Bifidobacterium animalis subsp. lactis (strain AD011)).